Here is a 631-residue protein sequence, read N- to C-terminus: Pescadillo homolog (631 aa).

The 94-residue stretch at 321–414 (RLRTLFKGLK…QLLPTNDYFL (94 aa)) folds into the BRCT domain. Over residues 428–442 (SKRDSYIPPEEKALH) the composition is skewed to basic and acidic residues. 2 disordered regions span residues 428-471 (SKRD…EADQ) and 489-560 (YKKY…EVDE). Serine 453 and serine 457 each carry phosphoserine. Acidic residues-rich tracts occupy residues 453–471 (SEEE…EADQ) and 498–525 (VNED…EDVD). Basic and acidic residues predominate over residues 526 to 538 (EQTKRKQQEKEKM). The span at 544–553 (KVHKVNKRQV) shows a compositional bias: basic residues. Residues 593–629 (LRKKRRNIDADTKEAKKAAKREARKLAAEAAARAAKL) are a coiled coil.

It belongs to the pescadillo family.

It is found in the nucleus. The protein resides in the nucleolus. The protein localises to the nucleoplasm. In terms of biological role, required for maturation of ribosomal RNAs and formation of the large ribosomal subunit. The sequence is that of Pescadillo homolog from Drosophila persimilis (Fruit fly).